We begin with the raw amino-acid sequence, 330 residues long: DNA-directed RNA polymerase subunit alpha (330 aa).

Residues 1 to 236 (MQNSVIEFLK…EQLEAFIDLR (236 aa)) form an alpha N-terminal domain (alpha-NTD) region. Residues 250–330 (FDPILLRLVD…NWPPTNILDN (81 aa)) are alpha C-terminal domain (alpha-CTD).

Belongs to the RNA polymerase alpha chain family. Homodimer. The RNAP catalytic core consists of 2 alpha, 1 beta, 1 beta' and 1 omega subunit. When a sigma factor is associated with the core the holoenzyme is formed, which can initiate transcription.

The catalysed reaction is RNA(n) + a ribonucleoside 5'-triphosphate = RNA(n+1) + diphosphate. In terms of biological role, DNA-dependent RNA polymerase catalyzes the transcription of DNA into RNA using the four ribonucleoside triphosphates as substrates. The sequence is that of DNA-directed RNA polymerase subunit alpha from Blochmanniella pennsylvanica (strain BPEN).